The following is a 611-amino-acid chain: Leukotriene A-4 hydrolase (611 aa).

Lys73 bears the N6-acetyllysine mark. Residues 135–137 (QCQ) and 267–272 (PYGGME) each bind a peptide. His296 lines the Zn(2+) pocket. The active-site Proton acceptor is Glu297. 2 residues coordinate Zn(2+): His300 and Glu319. Lys337 bears the N6-acetyllysine mark. Residue Tyr384 is the Proton donor of the active site. Lys414 bears the N6-acetyllysine mark. At Ser416 the chain carries Phosphoserine. 564 to 566 (RMK) is a binding site for a peptide. Lys573 is modified (N6-acetyllysine).

It belongs to the peptidase M1 family. As to quaternary structure, monomer. The cofactor is Zn(2+). In terms of processing, phosphorylation at Ser-416 inhibits leukotriene-A4 hydrolase activity. activity.

It is found in the cytoplasm. It catalyses the reaction leukotriene A4 + H2O = leukotriene B4. The catalysed reaction is (5S,6S)-epoxy-(18R)-hydroxy-(7E,9E,11Z,14Z,16E)-eicosapentaenoate + H2O = resolvin E1. The enzyme catalyses (5S,6S)-epoxy-(18S)-hydroxy-(7E,9E,11Z,14Z,16E)-eicosapentaenoate + H2O = 18S-resolvin E1. It carries out the reaction Release of the N-terminal residue from a tripeptide.. It functions in the pathway lipid metabolism; leukotriene B4 biosynthesis. With respect to regulation, inhibited by bestatin. The epoxide hydrolase activity is restrained by suicide inactivation that involves binding of LTA4 to Tyr-379. 4-(4-benzylphenyl)thiazol-2-amine (ARM1) selectively inhibits the epoxide hydrolase activity. Functionally, bifunctional zinc metalloenzyme that comprises both epoxide hydrolase (EH) and aminopeptidase activities. Acts as an epoxide hydrolase to catalyze the conversion of LTA4 to the pro-inflammatory mediator leukotriene B4 (LTB4). Also has aminopeptidase activity, with high affinity for N-terminal arginines of various synthetic tripeptides. In addition to its pro-inflammatory EH activity, may also counteract inflammation by its aminopeptidase activity, which inactivates by cleavage another neutrophil attractant, the tripeptide Pro-Gly-Pro (PGP), a bioactive fragment of collagen generated by the action of matrix metalloproteinase-9 (MMP9) and prolylendopeptidase (PREPL). Involved also in the biosynthesis of resolvin E1 and 18S-resolvin E1 from eicosapentaenoic acid, two lipid mediators that show potent anti-inflammatory and pro-resolving actions. The sequence is that of Leukotriene A-4 hydrolase (LTA4H) from Bos taurus (Bovine).